A 751-amino-acid chain; its full sequence is Leucine-rich repeat-containing protein 56 homolog (751 aa).

The tract at residues 1–149 (MKKSTVLDAR…IDKSRDNGQL (149 aa)) is disordered. Positions 13-22 (GPLPRRPQQP) are enriched in pro residues. Polar residues-rich tracts occupy residues 28–39 (RNSSQVEKNNAR) and 60–87 (HSQS…NLNS). 5 LRR repeats span residues 210–235 (MPQL…NYAN), 236–256 (LRRL…GACA), 258–279 (VLEE…TEVS), 280–304 (STLQ…TLPQ), and 307–328 (KMKH…VELS). 3 disordered regions span residues 430-538 (SRSH…QRQQ), 645-698 (TCTH…EKDW), and 717-751 (EAAL…PVVF). Composition is skewed to polar residues over residues 456–471 (KNSQ…TNQG) and 662–671 (QQEQPTTAGA). Over residues 717 to 738 (EAALKERVQGSKEVDGGGLEKV) the composition is skewed to basic and acidic residues. Residues 739 to 751 (ESEDEEDVSPVVF) show a composition bias toward acidic residues.

This sequence belongs to the LRRC56 family.

It localises to the cell projection. The protein resides in the cilium. The protein localises to the flagellum. Its function is as follows. Required for the assembly of dynein arms in the distal portion of flagellum axoneme. The chain is Leucine-rich repeat-containing protein 56 homolog from Trypanosoma brucei brucei (strain 927/4 GUTat10.1).